The chain runs to 322 residues: Crystallin J1A (322 aa).

It belongs to the ADP-ribosylglycohydrolase family. J1 crystallin subfamily. In terms of tissue distribution, expressed in the rhopalia. Present in both the large and small eyes.

The sequence is that of Crystallin J1A from Tripedalia cystophora (Jellyfish).